The following is a 487-amino-acid chain: NADH-quinone oxidoreductase subunit N (487 aa).

14 helical membrane passes run leucine 8 to isoleucine 28, phenylalanine 35 to valine 55, glycine 78 to tyrosine 98, glutamate 104 to histidine 124, leucine 125 to tyrosine 145, tyrosine 159 to alanine 179, isoleucine 203 to phenylalanine 223, proline 235 to methionine 255, leucine 271 to glutamine 291, leucine 297 to glutamine 317, isoleucine 328 to leucine 348, alanine 376 to glycine 396, leucine 409 to leucine 428, and alanine 451 to isoleucine 471.

The protein belongs to the complex I subunit 2 family. As to quaternary structure, NDH-1 is composed of 13 different subunits. Subunits NuoA, H, J, K, L, M, N constitute the membrane sector of the complex.

The protein resides in the cell inner membrane. It carries out the reaction a quinone + NADH + 5 H(+)(in) = a quinol + NAD(+) + 4 H(+)(out). In terms of biological role, NDH-1 shuttles electrons from NADH, via FMN and iron-sulfur (Fe-S) centers, to quinones in the respiratory chain. The immediate electron acceptor for the enzyme in this species is believed to be ubiquinone. Couples the redox reaction to proton translocation (for every two electrons transferred, four hydrogen ions are translocated across the cytoplasmic membrane), and thus conserves the redox energy in a proton gradient. This chain is NADH-quinone oxidoreductase subunit N, found in Yersinia pestis bv. Antiqua (strain Angola).